A 901-amino-acid polypeptide reads, in one-letter code: Desmocollin-2 (901 aa).

An N-terminal signal peptide occupies residues 1–27 (MEAARPSGSWNGALCRLLLLTLAILIF). A propeptide spanning residues 28-135 (ASDACKNVTL…KEKVLRRAKR (108 aa)) is cleaved from the precursor. 2 N-linked (GlcNAc...) asparagine glycosylation sites follow: Asn-34 and Asn-166. 5 consecutive Cadherin domains span residues 136–243 (RWAP…YPIF), 244–355 (TEET…LPTF), 356–471 (TRTS…GPEC), 472–579 (NPPI…FIPK), and 580–694 (KTVI…QLGK). Over 136–694 (RWAPIPCSML…IGGGGVQLGK (559 aa)) the chain is Extracellular. Asn-392 is a glycosylation site (N-linked (GlcNAc...) (complex) asparagine). N-linked (GlcNAc...) asparagine glycans are attached at residues Asn-546 and Asn-629. The chain crosses the membrane as a helical span at residues 695 to 715 (WAILAILLGIALLFCILFTLV). The Cytoplasmic segment spans residues 716 to 901 (CGASGTSKQP…RTLAEACMKR (186 aa)). Residues Ser-864, Ser-868, and Ser-873 each carry the phosphoserine modification.

As to quaternary structure, interacts with DSP, PKP2 and JUP. Interacts with DSG3; the interaction may limit the interaction of DSC3 with p38MAPK family members and therefore repress p38MAPK signaling activation. As to expression, expressed at intercalated disks in the heart, where it is colocalized with CDH2 (at protein level). Expressed in intestinal mucosal cells (at protein level).

Its subcellular location is the cell membrane. It localises to the cell junction. The protein localises to the desmosome. A component of desmosome cell-cell junctions which are required for positive regulation of cellular adhesion. Promotes timely incorporation of DSG2 into desmosome intercellular junctions and promotes interaction of desmosome cell junctions with intermediate filament cytokeratin, via modulation of DSP phosphorylation. Plays an important role in desmosome-mediated maintenance of intestinal epithelial cell intercellular adhesion strength and barrier function. Positively regulates wound healing of intestinal mucosa via promotion of epithelial cell migration, and also plays a role in mechanotransduction of force between intestinal epithelial cells and extracellular matrix. May contribute to epidermal cell positioning (stratification) by mediating differential adhesiveness between cells that express different isoforms. May promote p38MAPK signaling activation that facilitates keratinocyte migration. The sequence is that of Desmocollin-2 from Homo sapiens (Human).